The chain runs to 177 residues: R-phycoerythrin beta chain (177 aa).

Phycourobilin contacts are provided by cysteine 50 and cysteine 61. Asparagine 72 bears the N4-methylasparagine mark. Positions 82 and 158 each coordinate (2R,3E)-phycoerythrobilin.

The protein belongs to the phycobiliprotein family. As to quaternary structure, heterodimer of an alpha and a beta chain. Contains two covalently linked phycoerythrobilin chromophores and one covalently linked phycourobilin chromophore.

It is found in the plastid. It localises to the chloroplast thylakoid membrane. Its function is as follows. Light-harvesting photosynthetic bile pigment-protein from the phycobiliprotein complex. In Pyropia haitanensis (Red seaweed), this protein is R-phycoerythrin beta chain (cpeB).